The primary structure comprises 310 residues: Aspartate carbamoyltransferase catalytic subunit (310 aa).

Residues Arg59 and Thr60 each contribute to the carbamoyl phosphate site. Position 87 (Lys87) interacts with L-aspartate. Carbamoyl phosphate contacts are provided by Arg109, His137, and Gln140. Arg170 and Arg225 together coordinate L-aspartate. Residues Gly266 and Pro267 each coordinate carbamoyl phosphate.

Belongs to the aspartate/ornithine carbamoyltransferase superfamily. ATCase family. Heterododecamer (2C3:3R2) of six catalytic PyrB chains organized as two trimers (C3), and six regulatory PyrI chains organized as three dimers (R2).

The catalysed reaction is carbamoyl phosphate + L-aspartate = N-carbamoyl-L-aspartate + phosphate + H(+). Its pathway is pyrimidine metabolism; UMP biosynthesis via de novo pathway; (S)-dihydroorotate from bicarbonate: step 2/3. In terms of biological role, catalyzes the condensation of carbamoyl phosphate and aspartate to form carbamoyl aspartate and inorganic phosphate, the committed step in the de novo pyrimidine nucleotide biosynthesis pathway. This chain is Aspartate carbamoyltransferase catalytic subunit, found in Pelobacter propionicus (strain DSM 2379 / NBRC 103807 / OttBd1).